Consider the following 1517-residue polypeptide: MSKFKVIEIKEDARPRDFEAFQLRLASPEKIKSWSYGEVKKPETINYRTLKPERDGLFCAKIFGPIRDYECLCGKYKKMRFKGVKCEKCGVEVANSKVRRSRMGHIELVTPVAHIWYVNSLPSRIGTLLGVKMKDLERVLYYEAYIVENPGDAFYDNESTKKVEYCDVLNEEQYQNLMQRYENSGFKARMGGEVVRDLLANLDLVALLNQLKEEMAATNSEAKKKTIIKRLKVVENFLNSNLNANTDSDEAVPNRPEWMMITNLPVLPPDLRPLVALDGGKFAVSDVNDLYRRVINRNTRLKKLMELDAPEIIIRNEKRMLQEAVDALFDNGRRANAVKGANKRPLKSLSEIIKGKQGRFRQNLLGKRVDFSGRSVIVVGPKLRMDQCGLPKKMALELFKPHLLAKLEEKGYATTVKQAKKMIENKTNEVWECLEEVVKGHPVMLNRAPTLHKLSIQAFHPVLVEGKAIQLHPLVCAAFNADFDGDQMAVHVPLSQEAIAECKVLMLSSMNILLPASGKSVTVPSQDMVLGIYYLSLEKAGAKGSHKICTGIDEVMMALESKCLDIHASIQTMVDGRKITTTAGRLIIKSILPDFVPENSWNKVLKKKDIAALVDYVYKQGGLEITASFLDRLKNLGFEYATKAGISISIADIIVPNDKQKAIDEAKKQVREIQNSYNLGLITSGERYNKIIDIWKSTNNVLSKEMMKLVEKDKEGFNSIYMMADSGARGSAAQISQLAAMRGLMTKPDGSIIETPIISNFREGLNVLEYFISTHGARKGLADTALKTANAGYLTRKLIDVAQNVKITIEDCGTHEGVEINEITADSSIIETLEERILGRVLAEDVIDPITNSVLFAEGTLMDEEKAKILGESGIKSVNIRTPITCKAKKGICAKCYGINLGEGKLVKPGEAVGIVSAQSIGEPGTQLTLRTFHSGGTASTDLQDRQVSAQKEGFIRFYNLKTYKNKEGKNIVANRRNAAILLVEPKIKTPFKGVINIENIHEDVIVSIKDKKQEVKYILRKYDLAKPNELAGVSGSIDGKLYLPYQSGMQVEENESIVEVIKEGWNVLNRIPFASEILVEDGEPVVQNIKAGEKGTLKFYILKGDGLDRVKNVKKGDIVKEKGFFVVIADENDREAKRHYIPRESKIEFNDSEKIDDANTIIASAPKKERKVIAEWDAYNNTIIAEIDGVVSFEDIEAGYSADEQIDEATGKRSLVINEYLPSGVRPTLVIAGKGDKAVRYQLEPKTVIFVHDGDKIAQADILAKTPKAAAKSKDITGGLPRVSELFEARKPKNAAVIAEIDGVVRFDKPLRSKERIIIQAEDGTSAEYLIDKSKHIQVRDGEFIHAGEKLTDGVVSSHDVLKILGEKALHYYLISEIQQVYRGQGVVISDKHIEVIVSQMLRQVKVVDSGHTKFIEGDLVSRRKFREENERIIRMGGEPAIAEPVLLGVTRAAIGSDSVISAASFQETTKVLTEASIAGKFDYLEDLKENVILGRMIPVGTGLYGEQNLKLKEQE.

4 residues coordinate Zn(2+): Cys71, Cys73, Cys86, and Cys89. Mg(2+) contacts are provided by Asp482, Asp484, and Asp486. 4 residues coordinate Zn(2+): Cys812, Cys886, Cys893, and Cys896.

It belongs to the RNA polymerase beta' chain family. In terms of assembly, the RNAP catalytic core consists of 2 alpha, 1 beta, 1 beta' and 1 omega subunit. When a sigma factor is associated with the core the holoenzyme is formed, which can initiate transcription. Mg(2+) is required as a cofactor. The cofactor is Zn(2+).

It catalyses the reaction RNA(n) + a ribonucleoside 5'-triphosphate = RNA(n+1) + diphosphate. Its function is as follows. DNA-dependent RNA polymerase catalyzes the transcription of DNA into RNA using the four ribonucleoside triphosphates as substrates. This chain is DNA-directed RNA polymerase subunit beta', found in Campylobacter jejuni subsp. jejuni serotype O:23/36 (strain 81-176).